The following is a 67-amino-acid chain: Large ribosomal subunit protein bL35 (67 aa).

Residues 1 to 16 (MPKMKTKSSAKKRFRV) show a composition bias toward basic residues. Residues 1 to 24 (MPKMKTKSSAKKRFRVRPGGTVKR) form a disordered region.

Belongs to the bacterial ribosomal protein bL35 family.

The polypeptide is Large ribosomal subunit protein bL35 (Verminephrobacter eiseniae (strain EF01-2)).